Reading from the N-terminus, the 708-residue chain is B-cell lymphoma 6 protein homolog (708 aa).

The BTB domain maps to 32 to 99 (TDVVIIVNRE…MYTSRLNLRE (68 aa)). A compositionally biased stretch (basic and acidic residues) spans 303–317 (AKEEERTSSEDEISQ). 2 disordered regions span residues 303 to 371 (AKEE…KSPT) and 431 to 470 (PTKM…QSPL). Polar residues-rich tracts occupy residues 333–370 (SPQS…TKSP) and 431–454 (PTKM…NIVN). 6 C2H2-type zinc fingers span residues 520–543 (FFCN…LQVH), 548–570 (YKCD…KTVH), 576–598 (YRCN…TRIH), 604–626 (YKCE…VLIH), 632–654 (YPCE…LRIH), and 660–683 (YHCE…RQKH).

Its subcellular location is the nucleus. In terms of biological role, transcriptional repressor mainly required for germinal center (GC) formation and antibody affinity maturation which has different mechanisms of action specific to the lineage and biological functions. Forms complexes with different corepressors and histone deacetylases to repress the transcriptional expression of different subsets of target genes. Represses its target genes by binding directly to the DNA sequence 5'-TTCCTAGAA-3' (BCL6-binding site) or indirectly by repressing the transcriptional activity of transcription factors. In GC B-cells, represses genes that function in differentiation, inflammation, apoptosis and cell cycle control, also autoregulates its transcriptional expression and up-regulates, indirectly, the expression of some genes important for GC reactions, such as AICDA, through the repression of microRNAs expression. An important function is to allow GC B-cells to proliferate very rapidly in response to T-cell dependent antigens and tolerate the physiological DNA breaks required for immunglobulin class switch recombination and somatic hypermutation without inducing a p53/TP53-dependent apoptotic response. In follicular helper CD4(+) T-cells (T(FH) cells), promotes the expression of T(FH)-related genes but inhibits the differentiation of T(H)1, T(H)2 and T(H)17 cells. Also required for the establishment and maintenance of immunological memory for both T- and B-cells. Suppresses macrophage proliferation through competition with STAT5 for STAT-binding motifs binding on certain target genes, such as CCL2 and CCND2. In response to genotoxic stress, controls cell cycle arrest in GC B-cells in both p53/TP53-dependedent and -independent manners. Besides, also controls neurogenesis through the alteration of the composition of NOTCH-dependent transcriptional complexes at selective NOTCH targets, such as HES5, including the recruitment of the deacetylase SIRT1 and resulting in an epigenetic silencing leading to neuronal differentiation. This Gallus gallus (Chicken) protein is B-cell lymphoma 6 protein homolog.